Reading from the N-terminus, the 280-residue chain is Nucleotide-binding protein Swoo_4243 (280 aa).

8–15 lines the ATP pocket; sequence GRSGSGKS. 56–59 lines the GTP pocket; it reads DVRN.

The protein belongs to the RapZ-like family.

Displays ATPase and GTPase activities. In Shewanella woodyi (strain ATCC 51908 / MS32), this protein is Nucleotide-binding protein Swoo_4243.